The primary structure comprises 122 residues: Sarcocystatin-A (122 aa).

The N-terminal stretch at 1–20 (MKYVLILCVITLATVAYAQP) is a signal peptide. Gln-21 bears the Pyrrolidone carboxylic acid mark. The short motif at 67–71 (QVVSG) is the Secondary area of contact element.

It belongs to the cystatin family.

Its function is as follows. Selectively inhibits the activity of cysteine proteinase of hemocytes, protecting developing adult tissue in pupae from attack by the proteinase. The protein is Sarcocystatin-A of Sarcophaga peregrina (Flesh fly).